The sequence spans 321 residues: ATP-dependent 6-phosphofructokinase (321 aa).

Gly-11 is a binding site for ATP. Residue 21–25 participates in ADP binding; the sequence is RAVVR. ATP contacts are provided by residues 72 to 73 and 102 to 105; these read RC and GDGS. Asp-103 serves as a coordination point for Mg(2+). 126–128 lines the substrate pocket; sequence TID. The Proton acceptor role is filled by Asp-128. An ADP-binding site is contributed by Arg-155. Substrate is bound by residues Arg-163 and 170-172; that span reads MGR. ADP is bound by residues 186 to 188, Arg-212, and 214 to 216; these read GAE and KLH. Substrate-binding positions include Glu-223, Arg-245, and 251 to 254; that span reads HIQR.

Belongs to the phosphofructokinase type A (PFKA) family. ATP-dependent PFK group I subfamily. Prokaryotic clade 'B1' sub-subfamily. Homotetramer. Mg(2+) is required as a cofactor.

It is found in the cytoplasm. It carries out the reaction beta-D-fructose 6-phosphate + ATP = beta-D-fructose 1,6-bisphosphate + ADP + H(+). The protein operates within carbohydrate degradation; glycolysis; D-glyceraldehyde 3-phosphate and glycerone phosphate from D-glucose: step 3/4. With respect to regulation, allosterically activated by ADP and other diphosphonucleosides, and allosterically inhibited by phosphoenolpyruvate. Catalyzes the phosphorylation of D-fructose 6-phosphate to fructose 1,6-bisphosphate by ATP, the first committing step of glycolysis. The polypeptide is ATP-dependent 6-phosphofructokinase (Caldanaerobacter subterraneus subsp. tengcongensis (strain DSM 15242 / JCM 11007 / NBRC 100824 / MB4) (Thermoanaerobacter tengcongensis)).